The primary structure comprises 489 residues: Rhamnulokinase (489 aa).

An ATP-binding site is contributed by 13–17 (ASSGR). The cysteines at positions 68 and 222 are disulfide-linked. Residues Gly-83 and 236–238 (HDT) each bind substrate. The Proton acceptor role is filled by Asp-237. Thr-259 lines the ATP pocket. Asn-296 lines the substrate pocket. Gln-304 provides a ligand contact to ATP. Cysteines 353 and 370 form a disulfide. Gly-402 contacts ATP. Cysteines 413 and 417 form a disulfide.

Belongs to the rhamnulokinase family. Mg(2+) serves as cofactor.

It catalyses the reaction L-rhamnulose + ATP = L-rhamnulose 1-phosphate + ADP + H(+). It functions in the pathway carbohydrate degradation; L-rhamnose degradation; glycerone phosphate from L-rhamnose: step 2/3. Its function is as follows. Involved in the catabolism of L-rhamnose (6-deoxy-L-mannose). Catalyzes the transfer of the gamma-phosphate group from ATP to the 1-hydroxyl group of L-rhamnulose to yield L-rhamnulose 1-phosphate. This Salmonella paratyphi A (strain AKU_12601) protein is Rhamnulokinase.